Reading from the N-terminus, the 538-residue chain is Putative cysteine ligase BshC (538 aa).

Positions 460-483 (KINEQIELLEKMLKRNVEKKHEVQ) form a coiled coil.

Belongs to the BshC family.

Functionally, involved in bacillithiol (BSH) biosynthesis. May catalyze the last step of the pathway, the addition of cysteine to glucosamine malate (GlcN-Mal) to generate BSH. This is Putative cysteine ligase BshC from Bacillus mycoides (strain KBAB4) (Bacillus weihenstephanensis).